Reading from the N-terminus, the 346-residue chain is MKNILRAMVILLIICGTYVLFIQYGSVPEKKSNDSEPQVSNEEAQSGKRIHMPTSGLLSFMGKHADEVTKKLGEPERIDPSAYDYDWWVYNQGKDQYIQIGVLNNKVVTLFASGNDINAKPFKIGESTGEVFKTTQVAPFVNVEYKGNSYRFEFSEEDINTRPTVKVGKMYVQLYMDKFEGKLSSIRAFDAQTFVKQRPYEVVYRGELIKPKAVSDEKWKKIQTTSEKQILDLTNVIRVKHGLAKLEWDQPTAEVAFGHSEDMKENNYFSHVSKKYGSLKDRLEEGHVDFQQAGENIAYNYVDGPAAVEGWLNSEGHRKALLNSDYTHLGVGVDRKYYTQNFIKRW.

A helical transmembrane segment spans residues 7–27; that stretch reads AMVILLIICGTYVLFIQYGSV. The interval 29–48 is disordered; sequence EKKSNDSEPQVSNEEAQSGK. Over residues 35 to 44 the composition is skewed to polar residues; that stretch reads SEPQVSNEEA. In terms of domain architecture, SCP spans 231–342; sequence LDLTNVIRVK…VDRKYYTQNF (112 aa).

It is found in the cell membrane. This is an uncharacterized protein from Bacillus subtilis (strain 168).